The following is a 361-amino-acid chain: RuBisCO accumulation factor 1 (361 aa).

The N-terminal alpha-helix stretch occupies residues 16–197 (NELAQELLRK…RKQIEQLLVD (182 aa)). The interval 221–347 (PRIVPVVGQL…VIILVRPRRI (127 aa)) is C-terminal beta-sheet.

This sequence belongs to the RAF family. Homodimer. Forms an RbcL(8)-Raf1(8) complex. Each Raf1 dimer clamps the exterior of an RbcL dimer, protecting it. The extreme C-terminus (residues 354-361) inserts into the catalytic pocket of RbcL where the Glu-361 forms a salt bridge with 'Lys-202'. This insertion probably contributes to the assembly of RbcL(8). Forms complexes of many stoichiometries with RbcL with and without RbcS. RbcX and Raf1 can bind simultaneously to RbcL.

Its subcellular location is the cytoplasm. Functionally, a major RuBisCO chaperone. Acts after GroEL-GroES chaperonin to fold and/or assemble the large subunit of RuBisCO (ccbL, rbcL). Cooperates with RbcX in RbcL folding, plays the major role in assembly of dimers into RbcL(8)-Raf1(8) intermediate complexes. RbcS replaces Raf1, leading to holoenzyme formation. In terms of biological role, in vitro acts as an antagonist to CcmM35, suggesting it might regulate RuBisCO condensation and decondensation. This is RuBisCO accumulation factor 1 from Nostoc sp. (strain PCC 7120 / SAG 25.82 / UTEX 2576).